A 39-amino-acid chain; its full sequence is L-amino-acid oxidase (39 aa).

The protein belongs to the flavin monoamine oxidase family. FIG1 subfamily. Monomer. This is in contrast with most of its orthologs, that are non-covalently linked homodimers. FAD serves as cofactor. Post-translationally, N-glycosylated. Expressed by the venom gland.

Its subcellular location is the secreted. It catalyses the reaction an L-alpha-amino acid + O2 + H2O = a 2-oxocarboxylate + H2O2 + NH4(+). The enzyme catalyses L-leucine + O2 + H2O = 4-methyl-2-oxopentanoate + H2O2 + NH4(+). Its function is as follows. Catalyzes an oxidative deamination of predominantly hydrophobic and aromatic L-amino acids, thus producing hydrogen peroxide that may contribute to the diverse toxic effects of this enzyme. Shows activity on L-Leu. Exhibits diverse biological activities, such as hemorrhage, hemolysis, edema, apoptosis of vascular endothelial cells or tumor cell lines, and antiparasitic activities, as well as regulation of platelet aggregation. Effects of snake L-amino oxidases on platelets are controversial, since they either induce aggregation or inhibit agonist-induced aggregation. These different effects are probably due to different experimental conditions. In addition, this protein inhibits dose-dependently the growth of Gram-positive, Gram-negative bacteria and yeast, probably by the generation of hydrogen peroxide. This Bothrops marajoensis (Marajo lancehead) protein is L-amino-acid oxidase.